The following is a 134-amino-acid chain: MLSPKRTKYRKHHRGRMRGKASRGNTVVFGDYALQSLEASWITSRQIEAARRAMTRQVRRGGQIWIRLFPDKPVTMRPAETRMGSGKGAPEFWVAVVRPGKVLYELKGVPESVARVALRLAASKLPVKTQILVK.

A disordered region spans residues 1–21 (MLSPKRTKYRKHHRGRMRGKA).

It belongs to the universal ribosomal protein uL16 family. Part of the 50S ribosomal subunit.

It is found in the plastid. The protein localises to the chloroplast. This is Large ribosomal subunit protein uL16c from Chlorella vulgaris (Green alga).